A 542-amino-acid chain; its full sequence is CTP synthase (542 aa).

The tract at residues 1-265 is amidoligase domain; it reads MARYVFITGG…DSEVLSAFGI (265 aa). Residue Ser13 coordinates CTP. Ser13 provides a ligand contact to UTP. 14 to 19 contributes to the ATP binding site; sequence SLGKGI. Tyr54 contacts L-glutamine. Asp71 lines the ATP pocket. Mg(2+) is bound by residues Asp71 and Glu139. CTP contacts are provided by residues 146-148, 186-191, and Lys222; these read DIE and KTKPTQ. UTP is bound by residues 186–191 and Lys222; that span reads KTKPTQ. Residues 291–541 enclose the Glutamine amidotransferase type-1 domain; that stretch reads TIAVVGKYTG…IEAAIEQSRL (251 aa). Gly353 is an L-glutamine binding site. The active-site Nucleophile; for glutamine hydrolysis is the Cys380. Residues 381–384, Glu404, and Arg469 each bind L-glutamine; that span reads FGMQ. Active-site residues include His514 and Glu516.

This sequence belongs to the CTP synthase family. Homotetramer.

The enzyme catalyses UTP + L-glutamine + ATP + H2O = CTP + L-glutamate + ADP + phosphate + 2 H(+). It carries out the reaction L-glutamine + H2O = L-glutamate + NH4(+). It catalyses the reaction UTP + NH4(+) + ATP = CTP + ADP + phosphate + 2 H(+). The protein operates within pyrimidine metabolism; CTP biosynthesis via de novo pathway; CTP from UDP: step 2/2. Allosterically activated by GTP, when glutamine is the substrate; GTP has no effect on the reaction when ammonia is the substrate. The allosteric effector GTP functions by stabilizing the protein conformation that binds the tetrahedral intermediate(s) formed during glutamine hydrolysis. Inhibited by the product CTP, via allosteric rather than competitive inhibition. Catalyzes the ATP-dependent amination of UTP to CTP with either L-glutamine or ammonia as the source of nitrogen. Regulates intracellular CTP levels through interactions with the four ribonucleotide triphosphates. The protein is CTP synthase of Brucella canis (strain ATCC 23365 / NCTC 10854 / RM-666).